A 237-amino-acid chain; its full sequence is Ankyrin repeat protein 14 (237 aa).

ANK repeat units follow at residues 27 to 56 (RGETLLHKAVRYNKQSLVSLLLESGSDVNI) and 60 to 90 (NGYTCIAIAINESRNIELLKMLLCHKPTLDC).

May be involved in virus-host protein interaction through the ankyrin repeats. This chain is Ankyrin repeat protein 14, found in Vaccinia virus (strain Western Reserve) (VACV).